A 655-amino-acid polypeptide reads, in one-letter code: Sphingomyelin phosphodiesterase 3 (655 aa).

At Met-1–Asn-10 the chain is on the cytoplasmic side. The helical intramembrane region spans Ser-11–Val-31. The Cytoplasmic portion of the chain corresponds to Asp-32–Thr-64. 3 S-palmitoyl cysteine lipidation sites follow: Cys-53, Cys-54, and Cys-59. Positions Pro-65–Trp-85 form an intramembrane region, helical. Topologically, residues Ser-86 to Ala-655 are cytoplasmic. Position 178 is a phosphoserine (Ser-178). The segment at Val-209–Asn-318 is disordered. Composition is skewed to basic and acidic residues over residues Tyr-211–Asp-221 and Gly-246–Glu-255. Residue Ser-289 is modified to Phosphoserine. Glu-362 lines the Mg(2+) pocket. S-palmitoyl cysteine attachment occurs at residues Cys-395 and Cys-396. His-639 serves as the catalytic Proton acceptor.

The protein belongs to the neutral sphingomyelinase family. Mg(2+) is required as a cofactor. Post-translationally, palmitoylated, palmitoylation-deficient proteins are targeted for lysosomal degradation. In terms of tissue distribution, predominantly expressed in brain (at protein level).

Its subcellular location is the golgi apparatus membrane. It is found in the cell membrane. It catalyses the reaction a sphingomyelin + H2O = phosphocholine + an N-acylsphing-4-enine + H(+). It carries out the reaction N-(15Z-tetracosenoyl)sphing-4-enine-1-phosphocholine + H2O = N-(15Z-tetracosenoyl)-sphing-4-enine + phosphocholine + H(+). The catalysed reaction is N-(tetracosanoyl)-sphing-4-enine-1-phosphocholine + H2O = N-tetracosanoyl-sphing-4-enine + phosphocholine + H(+). The enzyme catalyses N-(hexadecanoyl)-sphing-4-enine-1-phosphocholine + H2O = N-hexadecanoylsphing-4-enine + phosphocholine + H(+). It catalyses the reaction an N-(acyl)-sphingosylphosphocholine + H2O = an N-acyl-sphingoid base + phosphocholine + H(+). It carries out the reaction 1-hexadecanoyl-sn-glycero-3-phosphocholine + H2O = 1-hexadecanoyl-sn-glycerol + phosphocholine + H(+). The catalysed reaction is 1-O-octadecyl-sn-glycero-3-phosphocholine + H2O = 1-O-octadecyl-sn-glycerol + phosphocholine + H(+). The enzyme catalyses a sphingosylphosphocholine + H2O = a sphingoid base + phosphocholine + H(+). It participates in lipid metabolism; sphingolipid metabolism. With respect to regulation, inhibited by nSMase inhibitor GW4869. Binding of anionic phospholipids (APLs) such as phosphatidylserine (PS) and phosphatidic acid (PA) increases enzymatic activity. Functionally, catalyzes the hydrolysis of sphingomyelin to form ceramide and phosphocholine. Ceramide mediates numerous cellular functions, such as apoptosis and growth arrest, and is capable of regulating these 2 cellular events independently. Also hydrolyzes sphingosylphosphocholine. Regulates the cell cycle by acting as a growth suppressor in confluent cells. Probably acts as a regulator of postnatal development and participates in bone and dentin mineralization. Binds to anionic phospholipids (APLs) such as phosphatidylserine (PS) and phosphatidic acid (PA) that modulate enzymatic activity and subcellular location. May be involved in IL-1-beta-induced JNK activation in hepatocytes. May act as a mediator in transcriptional regulation of NOS2/iNOS via the NF-kappa-B activation under inflammatory conditions. The polypeptide is Sphingomyelin phosphodiesterase 3 (Mus musculus (Mouse)).